The following is a 313-amino-acid chain: Holliday junction branch migration complex subunit RuvB (313 aa).

Residues 1–157 are large ATPase domain (RuvB-L); sequence MNEYIGQGNI…FGLIMELDFY (157 aa). Residues Gly38, Lys41, Thr42, Thr43, 104–106, Arg147, Tyr157, and Arg194 each bind ATP; that span reads EDF. Residue Thr42 coordinates Mg(2+). The tract at residues 158 to 228 is small ATPAse domain (RuvB-S); the sequence is SIDELSKIIE…MVEEIMFLLG (71 aa). A head domain (RuvB-H) region spans residues 231-313; the sequence is KEGLDELDRK…KVQRGLFDEE (83 aa). DNA-binding residues include Arg286 and Arg291.

This sequence belongs to the RuvB family. In terms of assembly, homohexamer. Forms an RuvA(8)-RuvB(12)-Holliday junction (HJ) complex. HJ DNA is sandwiched between 2 RuvA tetramers; dsDNA enters through RuvA and exits via RuvB. An RuvB hexamer assembles on each DNA strand where it exits the tetramer. Each RuvB hexamer is contacted by two RuvA subunits (via domain III) on 2 adjacent RuvB subunits; this complex drives branch migration. In the full resolvosome a probable DNA-RuvA(4)-RuvB(12)-RuvC(2) complex forms which resolves the HJ.

It localises to the cytoplasm. The enzyme catalyses ATP + H2O = ADP + phosphate + H(+). Its function is as follows. The RuvA-RuvB-RuvC complex processes Holliday junction (HJ) DNA during genetic recombination and DNA repair, while the RuvA-RuvB complex plays an important role in the rescue of blocked DNA replication forks via replication fork reversal (RFR). RuvA specifically binds to HJ cruciform DNA, conferring on it an open structure. The RuvB hexamer acts as an ATP-dependent pump, pulling dsDNA into and through the RuvAB complex. RuvB forms 2 homohexamers on either side of HJ DNA bound by 1 or 2 RuvA tetramers; 4 subunits per hexamer contact DNA at a time. Coordinated motions by a converter formed by DNA-disengaged RuvB subunits stimulates ATP hydrolysis and nucleotide exchange. Immobilization of the converter enables RuvB to convert the ATP-contained energy into a lever motion, pulling 2 nucleotides of DNA out of the RuvA tetramer per ATP hydrolyzed, thus driving DNA branch migration. The RuvB motors rotate together with the DNA substrate, which together with the progressing nucleotide cycle form the mechanistic basis for DNA recombination by continuous HJ branch migration. Branch migration allows RuvC to scan DNA until it finds its consensus sequence, where it cleaves and resolves cruciform DNA. The sequence is that of Holliday junction branch migration complex subunit RuvB from Thermosipho melanesiensis (strain DSM 12029 / CIP 104789 / BI429).